A 107-amino-acid chain; its full sequence is Integration host factor subunit beta (107 aa).

Positions arginine 56–arginine 107 are disordered. The segment covering proline 82–aspartate 101 has biased composition (basic and acidic residues).

It belongs to the bacterial histone-like protein family. Heterodimer of an alpha and a beta chain.

This protein is one of the two subunits of integration host factor, a specific DNA-binding protein that functions in genetic recombination as well as in transcriptional and translational control. In Burkholderia vietnamiensis (strain G4 / LMG 22486) (Burkholderia cepacia (strain R1808)), this protein is Integration host factor subunit beta.